The sequence spans 445 residues: Phosphoglucosamine mutase (445 aa).

Serine 102 (phosphoserine intermediate) is an active-site residue. Mg(2+) contacts are provided by serine 102, aspartate 240, aspartate 242, and aspartate 244. Position 102 is a phosphoserine (serine 102).

This sequence belongs to the phosphohexose mutase family. Mg(2+) serves as cofactor. In terms of processing, activated by phosphorylation.

It catalyses the reaction alpha-D-glucosamine 1-phosphate = D-glucosamine 6-phosphate. Functionally, catalyzes the conversion of glucosamine-6-phosphate to glucosamine-1-phosphate. This Mycobacterium sp. (strain JLS) protein is Phosphoglucosamine mutase.